Consider the following 363-residue polypeptide: Aminomethyltransferase (363 aa).

This sequence belongs to the GcvT family. In terms of assembly, the glycine cleavage system is composed of four proteins: P, T, L and H.

It carries out the reaction N(6)-[(R)-S(8)-aminomethyldihydrolipoyl]-L-lysyl-[protein] + (6S)-5,6,7,8-tetrahydrofolate = N(6)-[(R)-dihydrolipoyl]-L-lysyl-[protein] + (6R)-5,10-methylene-5,6,7,8-tetrahydrofolate + NH4(+). Its function is as follows. The glycine cleavage system catalyzes the degradation of glycine. This Thermosipho melanesiensis (strain DSM 12029 / CIP 104789 / BI429) protein is Aminomethyltransferase.